Reading from the N-terminus, the 168-residue chain is uncharacterized protein (168 aa).

Disordered stretches follow at residues 37–74, 81–100, and 117–168; these read GGSK…SQFT, QYNY…PNYY, and MQPF…EETN. 2 stretches are compositionally biased toward polar residues: residues 52-74 and 82-95; these read HSGQ…SQFT and YNYN…TRSV. The segment covering 120 to 129 has biased composition (low complexity); it reads FNNQSFNNQS. A compositionally biased stretch (polar residues) spans 130–158; it reads RTHQSKTYQHNQQKRSFNGPRNNGPQNNV.

This is an uncharacterized protein from Acanthamoeba polyphaga (Amoeba).